The chain runs to 158 residues: uncharacterized protein (158 aa).

It belongs to the SixA phosphatase family.

This is an uncharacterized protein from Mycobacterium tuberculosis (strain CDC 1551 / Oshkosh).